Consider the following 47-residue polypeptide: Delta-ctenitoxin-Asp2e (47 aa).

5 cysteine pairs are disulfide-bonded: Cys3-Cys17, Cys10-Cys23, Cys14-Cys46, Cys16-Cys31, and Cys25-Cys29.

As to expression, expressed by the venom gland.

Its subcellular location is the secreted. Inhibits the inactivation of voltage-gated sodium channels (Nav). This is Delta-ctenitoxin-Asp2e from Ancylometes sp. (South American fishing spider).